A 371-amino-acid chain; its full sequence is Macronuclear solute carrier homolog CR-MSC (371 aa).

Solcar repeat units follow at residues 16–111 (RMNY…FYDK), 120–208 (ARPD…CKEN), and 215–304 (PHWI…LSQF). The next 6 helical transmembrane spans lie at 22–42 (FAAA…LDMV), 89–109 (TFFF…GYFY), 126–146 (VAAG…IDIV), 184–204 (AGAN…IYDW), 221–241 (LWGT…FDMI), and 281–301 (FGSF…ICYL).

The protein belongs to the mitochondrial carrier (TC 2.A.29) family.

It localises to the membrane. This chain is Macronuclear solute carrier homolog CR-MSC, found in Oxytricha trifallax (Sterkiella histriomuscorum).